The sequence spans 456 residues: Yersinopine synthase (456 aa).

NADP(+)-binding positions include 12 to 15 (AGPA), 35 to 40 (NRPSTK), and Thr-154. The active-site Proton donor/acceptor is His-242.

It belongs to the staphylopine dehydrogenase family. As to quaternary structure, homodimer.

It carries out the reaction yersinopine + NADP(+) + H2O = (2S)-2-amino-4-{[(1S)-1-carboxy-2-(1H-imidazol-4-yl)ethyl]amino}butanoate + pyruvate + NADPH + H(+). Catalyzes the NADPH-dependent reductive condensation of pyruvate to the intermediate formed by the adjacently encoded enzyme y2836, namely (2S)-2-amino-4-{[(1S)-1-carboxy-2-(1H-imidazol-4-yl)ethyl]amino}butanoate, leading to the production of yersinopine. This is the last step in the biosynthesis of the metallophore yersinopine, which is involved in metal acquisition and thus enables bacterial growth inside the host, where metal access is limited. Therefore, this enzyme probably contributes to Yersinia virulence. Cannot use alpha-ketoglutarate in place of pyruvate, and displays only poor efficiency with oxaloacetate and glyoxylate. This is Yersinopine synthase from Yersinia pestis.